Here is a 425-residue protein sequence, read N- to C-terminus: Glutamate-1-semialdehyde 2,1-aminomutase (425 aa).

At lysine 265 the chain carries N6-(pyridoxal phosphate)lysine.

It belongs to the class-III pyridoxal-phosphate-dependent aminotransferase family. HemL subfamily. In terms of assembly, homodimer. Pyridoxal 5'-phosphate is required as a cofactor.

The protein localises to the cytoplasm. It catalyses the reaction (S)-4-amino-5-oxopentanoate = 5-aminolevulinate. Its pathway is porphyrin-containing compound metabolism; protoporphyrin-IX biosynthesis; 5-aminolevulinate from L-glutamyl-tRNA(Glu): step 2/2. This chain is Glutamate-1-semialdehyde 2,1-aminomutase, found in Laribacter hongkongensis (strain HLHK9).